A 90-amino-acid chain; its full sequence is UPF0223 protein LMHCC_1569 (90 aa).

The protein belongs to the UPF0223 family.

The protein is UPF0223 protein LMHCC_1569 of Listeria monocytogenes serotype 4a (strain HCC23).